Consider the following 151-residue polypeptide: Deoxyuridine 5'-triphosphate nucleotidohydrolase (151 aa).

Residues 70-72 (RSG), N83, 87-89 (LID), and M97 each bind substrate.

Belongs to the dUTPase family. It depends on Mg(2+) as a cofactor.

It carries out the reaction dUTP + H2O = dUMP + diphosphate + H(+). Its pathway is pyrimidine metabolism; dUMP biosynthesis; dUMP from dCTP (dUTP route): step 2/2. Functionally, this enzyme is involved in nucleotide metabolism: it produces dUMP, the immediate precursor of thymidine nucleotides and it decreases the intracellular concentration of dUTP so that uracil cannot be incorporated into DNA. This chain is Deoxyuridine 5'-triphosphate nucleotidohydrolase, found in Pseudomonas paraeruginosa (strain DSM 24068 / PA7) (Pseudomonas aeruginosa (strain PA7)).